Reading from the N-terminus, the 573-residue chain is Probable zinc metallopeptidase EGY3, chloroplastic (573 aa).

Residues 1-50 constitute a chloroplast transit peptide; sequence MASLFVSTPSSSLTLKSCHSLHLRRFDRAEFSNFGKASVNQTTRSRHSLR. Residues 38–105 form a disordered region; sequence SVNQTTRSRH…EKKSKQQEMD (68 aa). Basic and acidic residues-rich tracts occupy residues 52 to 62 and 96 to 105; these read SAEDDRVREPV and EKKSKQQEMD. A coiled-coil region spans residues 122 to 185; the sequence is EAAIKLEKTR…KALDLNKLKS (64 aa). 7 helical membrane-spanning segments follow: residues 274-294, 305-325, 376-396, 414-434, 441-461, 493-513, and 536-556; these read VSAI…SGFF, IANV…SEIA, ASAY…DGSF, PLLS…GNVL, VGVP…VTSL, LLLG…GLFA, and FAWG…NSGG.

It belongs to the peptidase M50B family.

It localises to the plastid. Its subcellular location is the chloroplast membrane. Its function is as follows. Probable membrane-associated metalloprotease that may be involved in chloroplast development. This chain is Probable zinc metallopeptidase EGY3, chloroplastic (EGY3), found in Arabidopsis thaliana (Mouse-ear cress).